We begin with the raw amino-acid sequence, 460 residues long: MLKIYNTLTRQKEEFKPITAGKVGMYVCGVTIYDLCHIGHGRTFVSFDVVSRYLRYLGYDLTFVRNITDIDDKIIKRAAENGETCDSLTERLIGEMHADFDALNMKRPDVEPRATQYIQEIIELVERLIERGFAYVADNGDVMFEVNKFDEYGKLSKQDLDQLQAGARVDVETAKRCPLDFVLWKMSKPGEPTWESPWGPGRPGWHIECSAMNSSILGNHFDIHGGGSDLQFPHHENEIAQSCCAHDTQYVNTWMHSGMVMVDKEKMSKSLGNFFTIRDVLGHYDAETVRYFLMSGHYRSQLNYSEENLNQARASLERLYTSLRGLDFSAAPAGGEEYVSRFTAAMNDDFNTPEAYSVLFDMAREINRLKTEDLANASALGALMRELADVIGILHQDPDAFLKGDAGNDDEVAEIEALIKLRNDSRAAKDWANADMARDKLNEMGIVLEDGPEGTTWRRK.

Cysteine 28 serves as a coordination point for Zn(2+). Residues 30–40 (VTIYDLCHIGH) carry the 'HIGH' region motif. Residues cysteine 209, histidine 234, and glutamate 238 each contribute to the Zn(2+) site. Residues 266 to 270 (KMSKS) carry the 'KMSKS' region motif. ATP is bound at residue lysine 269.

The protein belongs to the class-I aminoacyl-tRNA synthetase family. In terms of assembly, monomer. It depends on Zn(2+) as a cofactor.

It localises to the cytoplasm. It carries out the reaction tRNA(Cys) + L-cysteine + ATP = L-cysteinyl-tRNA(Cys) + AMP + diphosphate. The sequence is that of Cysteine--tRNA ligase from Vibrio vulnificus (strain CMCP6).